Consider the following 207-residue polypeptide: Small ribosomal subunit protein uS4 (207 aa).

The segment at 31–55 (KCKLDSKPGQHGRTSGARTSDYGTQ) is disordered. Over residues 42–53 (GRTSGARTSDYG) the composition is skewed to polar residues. The S4 RNA-binding domain occupies 97 to 160 (SRLDNVVYRM…KKQARIVEAL (64 aa)).

Belongs to the universal ribosomal protein uS4 family. Part of the 30S ribosomal subunit. Contacts protein S5. The interaction surface between S4 and S5 is involved in control of translational fidelity.

Its function is as follows. One of the primary rRNA binding proteins, it binds directly to 16S rRNA where it nucleates assembly of the body of the 30S subunit. With S5 and S12 plays an important role in translational accuracy. The sequence is that of Small ribosomal subunit protein uS4 from Burkholderia orbicola (strain MC0-3).